The following is a 474-amino-acid chain: L-arabinose isomerase 2 (474 aa).

Mn(2+) is bound by residues E306, E331, H348, and H447.

This sequence belongs to the arabinose isomerase family. Mn(2+) is required as a cofactor.

The catalysed reaction is beta-L-arabinopyranose = L-ribulose. The protein operates within carbohydrate degradation; L-arabinose degradation via L-ribulose; D-xylulose 5-phosphate from L-arabinose (bacterial route): step 1/3. Its function is as follows. Catalyzes the conversion of L-arabinose to L-ribulose. The sequence is that of L-arabinose isomerase 2 from Bacillus licheniformis (strain ATCC 14580 / DSM 13 / JCM 2505 / CCUG 7422 / NBRC 12200 / NCIMB 9375 / NCTC 10341 / NRRL NRS-1264 / Gibson 46).